The sequence spans 116 residues: Ribonuclease P protein component (116 aa).

The protein belongs to the RnpA family. Consists of a catalytic RNA component (M1 or rnpB) and a protein subunit.

It catalyses the reaction Endonucleolytic cleavage of RNA, removing 5'-extranucleotides from tRNA precursor.. Its function is as follows. RNaseP catalyzes the removal of the 5'-leader sequence from pre-tRNA to produce the mature 5'-terminus. It can also cleave other RNA substrates such as 4.5S RNA. The protein component plays an auxiliary but essential role in vivo by binding to the 5'-leader sequence and broadening the substrate specificity of the ribozyme. This is Ribonuclease P protein component from Carboxydothermus hydrogenoformans (strain ATCC BAA-161 / DSM 6008 / Z-2901).